The chain runs to 631 residues: Probable sulfate transporter 3.3 (631 aa).

The Cytoplasmic segment spans residues 1–69 (MEVHKVVAPP…EYSFSLLKSD (69 aa)). The helical transmembrane segment at 70–90 (VVSGLTIASLAIPQGISYAKL) threads the bilayer. The Extracellular portion of the chain corresponds to 91 to 92 (AN). The helical transmembrane segment at 93-113 (LPPIVGLYSSFVPPLVYAVLG) threads the bilayer. Residues 114–117 (SSRD) are Cytoplasmic-facing. The chain crosses the membrane as a helical span at residues 118–138 (LAVGPVSIASLILGSMLRQQV). Topologically, residues 139–144 (SPVDDP) are extracellular. Residues 145-165 (VLFLQLAFSSTFFAGLFQASL) form a helical membrane-spanning segment. Topologically, residues 166–171 (GILRLG) are cytoplasmic. Residues 172-192 (FIIDFLSKATLIGFMGGAAII) form a helical membrane-spanning segment. Over 193 to 223 (VSLQQLKGLLGITHFTKHMSVVPVLSSVFQH) the chain is Extracellular. A helical transmembrane segment spans residues 224 to 244 (TNEWSWQTIVMGVCFLLFLLS). Residues 245 to 256 (TRHLSMKKPKLF) are Cytoplasmic-facing. A helical membrane pass occupies residues 257 to 277 (WVSAGAPLLSVIVSTLLVFVF). At 278 to 309 (RAERHGISVIGKLPEGLNPPSWNMLQFHGSHL) the chain is on the extracellular side. Residues 310-330 (ALVAKTGLVTGIVSLTEGIAV) form a helical membrane-spanning segment. The Cytoplasmic portion of the chain corresponds to 331–347 (GRTFAALKNYHVDGNKE). The chain crosses the membrane as a helical span at residues 348-368 (MIAIGLMNVVGSATSCYVTTG). Over 369-384 (AFSRSAVNNNAGAKTA) the chain is Extracellular. A helical membrane pass occupies residues 385–405 (VSNIVMSVTVMVTLLFLMPLF). The Cytoplasmic segment spans residues 406–410 (EYTPN). Residues 411 to 431 (VVLGAIIVTAVIGLIDLPAAC) traverse the membrane as a helical segment. At 432–441 (HIWKIDKFDF) the chain is on the extracellular side. A helical transmembrane segment spans residues 442–462 (LVMLCAFFGVIFLSVQNGLAI). Over 463–631 (AVGLSLFKIL…SLKGPSLSNV (169 aa)) the chain is Cytoplasmic. Residues 497-621 (HYKEAQRIPG…LTVAEAVASL (125 aa)) form the STAS domain.

Belongs to the SLC26A/SulP transporter (TC 2.A.53) family. In terms of tissue distribution, expressed only in leaves.

The protein localises to the membrane. In terms of biological role, h(+)/sulfate cotransporter that may play a role in the regulation of sulfate assimilation. The protein is Probable sulfate transporter 3.3 (SULTR3;3) of Arabidopsis thaliana (Mouse-ear cress).